Here is a 57-residue protein sequence, read N- to C-terminus: Small ribosomal subunit protein bS21 (57 aa).

Positions 31–57 (EVRKRKHYEKPSVRRKKKSEAARKRKF) are disordered. The segment covering 33-57 (RKRKHYEKPSVRRKKKSEAARKRKF) has biased composition (basic residues).

The protein belongs to the bacterial ribosomal protein bS21 family.

In Halalkalibacterium halodurans (strain ATCC BAA-125 / DSM 18197 / FERM 7344 / JCM 9153 / C-125) (Bacillus halodurans), this protein is Small ribosomal subunit protein bS21 (rpsU).